A 359-amino-acid polypeptide reads, in one-letter code: Stearoyl-CoA desaturase (359 aa).

Residues Met1–Val72 are Cytoplasmic-facing. A helical membrane pass occupies residues Trp73–Ile93. Asn75 lines the substrate pocket. Topologically, residues Pro94–Lys97 are lumenal. Residues Ile98–Gly118 traverse the membrane as a helical segment. The Cytoplasmic portion of the chain corresponds to Ala119–Tyr217. Residues His120 and His125 each contribute to the Fe cation site. A Histidine box-1 motif is present at residues His120–His125. Positions 148, 155, and 156 each coordinate substrate. The Fe cation site is built by His157, His160, and His161. The Histidine box-2 motif lies at His157 to His161. The substrate site is built by Arg188 and Lys189. A Phosphoserine modification is found at Ser203. Residues Tyr218–Cys237 form a helical membrane-spanning segment. Residues Trp238 to Ala241 lie on the Lumenal side of the membrane. A helical transmembrane segment spans residues Phe242 to Leu263. Trp262 serves as a coordination point for substrate. The Cytoplasmic segment spans residues Val264–Gly359. Fe cation-binding residues include His269, His298, His301, and His302. The Histidine box-3 signature appears at His298–His302.

It belongs to the fatty acid desaturase type 1 family. Fe(2+) serves as cofactor.

Its subcellular location is the endoplasmic reticulum membrane. The enzyme catalyses octadecanoyl-CoA + 2 Fe(II)-[cytochrome b5] + O2 + 2 H(+) = (9Z)-octadecenoyl-CoA + 2 Fe(III)-[cytochrome b5] + 2 H2O. The catalysed reaction is hexadecanoyl-CoA + 2 Fe(II)-[cytochrome b5] + O2 + 2 H(+) = (9Z)-hexadecenoyl-CoA + 2 Fe(III)-[cytochrome b5] + 2 H2O. In terms of biological role, stearoyl-CoA desaturase that utilizes O(2) and electrons from reduced cytochrome b5 to introduce the first double bond into saturated fatty acyl-CoA substrates. Catalyzes the insertion of a cis double bond at the delta-9 position into fatty acyl-CoA substrates including palmitoyl-CoA and stearoyl-CoA. Gives rise to a mixture of 16:1 and 18:1 unsaturated fatty acids. Plays an important role in lipid biosynthesis. Plays an important role in regulating the expression of genes that are involved in lipogenesis and in regulating mitochondrial fatty acid oxidation. Plays an important role in body energy homeostasis. Contributes to the biosynthesis of membrane phospholipids, cholesterol esters and triglycerides. The protein is Stearoyl-CoA desaturase (SCD) of Sus scrofa (Pig).